The chain runs to 608 residues: Glutamine--fructose-6-phosphate aminotransferase [isomerizing] (608 aa).

Cys-2 serves as the catalytic Nucleophile; for GATase activity. A Glutamine amidotransferase type-2 domain is found at 2–217 (CGIVGYSGKK…DKEFVVLTSE (216 aa)). 2 SIS domains span residues 285–424 (TKEQ…NKNT) and 453–598 (KVQK…VDKP). The active-site For Fru-6P isomerization activity is the Lys-603.

As to quaternary structure, homodimer.

It is found in the cytoplasm. The enzyme catalyses D-fructose 6-phosphate + L-glutamine = D-glucosamine 6-phosphate + L-glutamate. Its function is as follows. Catalyzes the first step in hexosamine metabolism, converting fructose-6P into glucosamine-6P using glutamine as a nitrogen source. This Clostridium acetobutylicum (strain ATCC 824 / DSM 792 / JCM 1419 / IAM 19013 / LMG 5710 / NBRC 13948 / NRRL B-527 / VKM B-1787 / 2291 / W) protein is Glutamine--fructose-6-phosphate aminotransferase [isomerizing].